The sequence spans 433 residues: Glutamyl-tRNA reductase (433 aa).

Substrate is bound by residues 49-52 (TCNR), Ser109, 114-116 (EGQ), and Gln120. The Nucleophile role is filled by Cys50. Residue 198–203 (GAGRMS) coordinates NADP(+).

This sequence belongs to the glutamyl-tRNA reductase family. As to quaternary structure, homodimer.

The enzyme catalyses (S)-4-amino-5-oxopentanoate + tRNA(Glu) + NADP(+) = L-glutamyl-tRNA(Glu) + NADPH + H(+). It functions in the pathway porphyrin-containing compound metabolism; protoporphyrin-IX biosynthesis; 5-aminolevulinate from L-glutamyl-tRNA(Glu): step 1/2. The protein operates within porphyrin-containing compound metabolism; chlorophyll biosynthesis. Its function is as follows. Catalyzes the NADPH-dependent reduction of glutamyl-tRNA(Glu) to glutamate 1-semialdehyde (GSA). This is Glutamyl-tRNA reductase from Prochlorococcus marinus subsp. pastoris (strain CCMP1986 / NIES-2087 / MED4).